The primary structure comprises 95 residues: Aspartyl/glutamyl-tRNA(Asn/Gln) amidotransferase subunit C (95 aa).

The protein belongs to the GatC family. As to quaternary structure, heterotrimer of A, B and C subunits.

It catalyses the reaction L-glutamyl-tRNA(Gln) + L-glutamine + ATP + H2O = L-glutaminyl-tRNA(Gln) + L-glutamate + ADP + phosphate + H(+). The enzyme catalyses L-aspartyl-tRNA(Asn) + L-glutamine + ATP + H2O = L-asparaginyl-tRNA(Asn) + L-glutamate + ADP + phosphate + 2 H(+). Allows the formation of correctly charged Asn-tRNA(Asn) or Gln-tRNA(Gln) through the transamidation of misacylated Asp-tRNA(Asn) or Glu-tRNA(Gln) in organisms which lack either or both of asparaginyl-tRNA or glutaminyl-tRNA synthetases. The reaction takes place in the presence of glutamine and ATP through an activated phospho-Asp-tRNA(Asn) or phospho-Glu-tRNA(Gln). The polypeptide is Aspartyl/glutamyl-tRNA(Asn/Gln) amidotransferase subunit C (Dehalococcoides mccartyi (strain ATCC BAA-2100 / JCM 16839 / KCTC 5957 / BAV1)).